The sequence spans 343 residues: Glucokinase (343 aa).

Residue 18 to 23 (GDIGGT) participates in ATP binding.

Belongs to the bacterial glucokinase family.

It localises to the cytoplasm. It catalyses the reaction D-glucose + ATP = D-glucose 6-phosphate + ADP + H(+). The protein is Glucokinase of Brucella abortus (strain 2308).